Reading from the N-terminus, the 697-residue chain is Portal protein (697 aa).

The segment at 633–697 is disordered; it reads MSREAAGGVP…RRAGGPYGFH (65 aa). The segment covering 664-689 has biased composition (basic and acidic residues); it reads ITADEERRGPERVGRFRNGGPDDPRR.

Belongs to the herpesviridae portal protein family. Homododecamerizes. Interacts with terminase subunits TRM1 and TRM3.

The protein resides in the virion. It localises to the host nucleus. Its function is as follows. Forms a portal in the viral capsid through which viral DNA is translocated during DNA packaging. Assembles as a dodecamer at a single fivefold axe of the T=16 icosahedric capsid. Binds to the molecular motor that translocates the viral DNA, termed terminase. The protein is Portal protein (UL104) of Homo sapiens (Human).